Here is a 465-residue protein sequence, read N- to C-terminus: Spermidine/putrescine import ATP-binding protein PotA (465 aa).

Polar residues predominate over residues 1–18 (MTATSGARTSDARTSGAR). Residues 1 to 21 (MTATSGARTSDARTSGARTSD) form a disordered region. Residues 30-264 (IELVGVAKDY…PRTRFVAGFI (235 aa)) enclose the ABC transporter domain. Residue 66-73 (GPSGCGKS) participates in ATP binding.

Belongs to the ABC transporter superfamily. Spermidine/putrescine importer (TC 3.A.1.11.1) family. The complex is composed of two ATP-binding proteins (PotA), two transmembrane proteins (PotB and PotC) and a solute-binding protein (PotD).

It is found in the cell membrane. The enzyme catalyses ATP + H2O + polyamine-[polyamine-binding protein]Side 1 = ADP + phosphate + polyamineSide 2 + [polyamine-binding protein]Side 1.. Part of the ABC transporter complex PotABCD involved in spermidine/putrescine import. Responsible for energy coupling to the transport system. The protein is Spermidine/putrescine import ATP-binding protein PotA of Frankia alni (strain DSM 45986 / CECT 9034 / ACN14a).